Reading from the N-terminus, the 225-residue chain is Chlorosome protein J (225 aa).

One can recognise a 2Fe-2S ferredoxin-type domain in the interval 1-95 (MIIYINDKPC…TIRVLTRAEK (95 aa)). Positions 33, 39, 42, and 77 each coordinate [2Fe-2S] cluster.

Requires [2Fe-2S] cluster as cofactor.

It is found in the chlorosome. In terms of biological role, could play a direct role in the oxidation or reduction of the quenching species formed in the chlorosome. The protein is Chlorosome protein J (csmJ) of Chlorobaculum tepidum (strain ATCC 49652 / DSM 12025 / NBRC 103806 / TLS) (Chlorobium tepidum).